Reading from the N-terminus, the 206-residue chain is ATP phosphoribosyltransferase (206 aa).

This sequence belongs to the ATP phosphoribosyltransferase family. Short subfamily. In terms of assembly, heteromultimer composed of HisG and HisZ subunits.

Its subcellular location is the cytoplasm. The catalysed reaction is 1-(5-phospho-beta-D-ribosyl)-ATP + diphosphate = 5-phospho-alpha-D-ribose 1-diphosphate + ATP. The protein operates within amino-acid biosynthesis; L-histidine biosynthesis; L-histidine from 5-phospho-alpha-D-ribose 1-diphosphate: step 1/9. Its function is as follows. Catalyzes the condensation of ATP and 5-phosphoribose 1-diphosphate to form N'-(5'-phosphoribosyl)-ATP (PR-ATP). Has a crucial role in the pathway because the rate of histidine biosynthesis seems to be controlled primarily by regulation of HisG enzymatic activity. In Leptospira interrogans serogroup Icterohaemorrhagiae serovar copenhageni (strain Fiocruz L1-130), this protein is ATP phosphoribosyltransferase.